The sequence spans 50 residues: Mast cell degranulating peptide (50 aa).

The N-terminal stretch at 1-27 (MISMLRCTFFFLSVILITSYFVTPTMS) is a signal peptide. K29 carries the N6-formyllysine; partial modification. Disulfide bonds link C30–C42 and C32–C46. 2 positions are modified to N6-formyllysine; partial: K44 and K48. The residue at position 49 (N49) is an Asparagine amide.

As to expression, expressed by the venom gland.

It localises to the secreted. Functionally, potent anti-inflammatory agent. At low concentrations, mediates the degranulation of mast cells thus evoking an inflammatory response. Also acts as a neurotoxin capable of blocking a class of voltage-gated potassium channels. The polypeptide is Mast cell degranulating peptide (Apis mellifera (Honeybee)).